Here is a 301-residue protein sequence, read N- to C-terminus: Ribonuclease HIII (301 aa).

The RNase H type-2 domain maps to 84-301 (ASAIGSDEVG…TEKAARIAKK (218 aa)). Asp-90, Glu-91, and Asp-195 together coordinate a divalent metal cation.

The protein belongs to the RNase HII family. RnhC subfamily. Mn(2+) is required as a cofactor. Mg(2+) serves as cofactor.

It localises to the cytoplasm. It catalyses the reaction Endonucleolytic cleavage to 5'-phosphomonoester.. Endonuclease that specifically degrades the RNA of RNA-DNA hybrids. The chain is Ribonuclease HIII from Geobacillus sp. (strain WCH70).